We begin with the raw amino-acid sequence, 159 residues long: Endoribonuclease YbeY (159 aa).

Histidine 117, histidine 121, and histidine 127 together coordinate Zn(2+).

Belongs to the endoribonuclease YbeY family. Zn(2+) is required as a cofactor.

The protein resides in the cytoplasm. Single strand-specific metallo-endoribonuclease involved in late-stage 70S ribosome quality control and in maturation of the 3' terminus of the 16S rRNA. The polypeptide is Endoribonuclease YbeY (Azorhizobium caulinodans (strain ATCC 43989 / DSM 5975 / JCM 20966 / LMG 6465 / NBRC 14845 / NCIMB 13405 / ORS 571)).